The following is a 280-amino-acid chain: Tryptophan synthase alpha chain (280 aa).

Active-site proton acceptor residues include glutamate 49 and aspartate 60.

Belongs to the TrpA family. As to quaternary structure, tetramer of two alpha and two beta chains.

The catalysed reaction is (1S,2R)-1-C-(indol-3-yl)glycerol 3-phosphate + L-serine = D-glyceraldehyde 3-phosphate + L-tryptophan + H2O. It functions in the pathway amino-acid biosynthesis; L-tryptophan biosynthesis; L-tryptophan from chorismate: step 5/5. In terms of biological role, the alpha subunit is responsible for the aldol cleavage of indoleglycerol phosphate to indole and glyceraldehyde 3-phosphate. The protein is Tryptophan synthase alpha chain of Corynebacterium efficiens (strain DSM 44549 / YS-314 / AJ 12310 / JCM 11189 / NBRC 100395).